The following is a 257-amino-acid chain: Nickel import system ATP-binding protein NikD (257 aa).

The ABC transporter domain maps to 4–245 (IDIQNLTIKN…HLHPYTEQLI (242 aa)). 37 to 44 (GESGAGKS) is an ATP binding site.

This sequence belongs to the ABC transporter superfamily. As to quaternary structure, the complex is composed of two ATP-binding proteins (NikD and NikE), two transmembrane proteins (NikB and NikC) and a solute-binding protein (NikA).

The protein localises to the cell membrane. It catalyses the reaction Ni(2+)(out) + ATP + H2O = Ni(2+)(in) + ADP + phosphate + H(+). Its function is as follows. Part of the ABC transporter complex NikABCDE (Opp2) involved in nickel import. Probably responsible for energy coupling to the transport system. The chain is Nickel import system ATP-binding protein NikD from Staphylococcus aureus (strain bovine RF122 / ET3-1).